A 338-amino-acid polypeptide reads, in one-letter code: Cinnamoyl-CoA reductase 1 (338 aa).

Residues 22–28 (GAGGFIG), arginine 47, lysine 53, 73–74 (DV), 93–95 (VAS), tyrosine 165, lysine 169, 192–195 (PSMT), and serine 207 each bind NADP(+). Cysteine 158 and cysteine 166 are joined by a disulfide. Residue lysine 169 is the Proton donor of the active site.

It belongs to the NAD(P)-dependent epimerase/dehydratase family. Dihydroflavonol-4-reductase subfamily. In terms of assembly, interacts with RAC1 in a GTP-dependent manner.

Its subcellular location is the cytoplasm. It catalyses the reaction (E)-cinnamaldehyde + NADP(+) + CoA = (E)-cinnamoyl-CoA + NADPH + H(+). It participates in aromatic compound metabolism; phenylpropanoid biosynthesis. With respect to regulation, activated by the small GTPase RAC1. Functionally, involved in the latter stages of lignin biosynthesis. Catalyzes one of the last steps of monolignol biosynthesis, the conversion of cinnamoyl-CoAs into their corresponding cinnamaldehydes. Probably involved in the formation of lignin in defense responses. The protein is Cinnamoyl-CoA reductase 1 of Oryza sativa subsp. japonica (Rice).